Consider the following 251-residue polypeptide: Adenosine 5'-phosphosulfate reductase (251 aa).

[4Fe-4S] cluster contacts are provided by C121, C122, C204, and C207. C232 (nucleophile; cysteine thiosulfonate intermediate) is an active-site residue.

It belongs to the PAPS reductase family. CysH subfamily. [4Fe-4S] cluster is required as a cofactor.

The protein resides in the cytoplasm. The enzyme catalyses [thioredoxin]-disulfide + sulfite + AMP + 2 H(+) = adenosine 5'-phosphosulfate + [thioredoxin]-dithiol. The protein operates within sulfur metabolism; hydrogen sulfide biosynthesis; sulfite from sulfate. Functionally, catalyzes the formation of sulfite from adenosine 5'-phosphosulfate (APS) using thioredoxin as an electron donor. The sequence is that of Adenosine 5'-phosphosulfate reductase from Sinorhizobium fredii (strain NBRC 101917 / NGR234).